Here is a 329-residue protein sequence, read N- to C-terminus: Sulfate/thiosulfate import ATP-binding protein CysA (329 aa).

Residues 3 to 237 (IEVRNVSKRF…PANDFVYHFL (235 aa)) enclose the ABC transporter domain. 35–42 (GPSGCGKT) contributes to the ATP binding site.

Belongs to the ABC transporter superfamily. Sulfate/tungstate importer (TC 3.A.1.6) family. The complex is composed of two ATP-binding proteins (CysA), two transmembrane proteins (CysT and CysW) and a solute-binding protein (CysP).

It localises to the cell inner membrane. The catalysed reaction is sulfate(out) + ATP + H2O = sulfate(in) + ADP + phosphate + H(+). It carries out the reaction thiosulfate(out) + ATP + H2O = thiosulfate(in) + ADP + phosphate + H(+). Part of the ABC transporter complex CysAWTP involved in sulfate/thiosulfate import. Responsible for energy coupling to the transport system. The polypeptide is Sulfate/thiosulfate import ATP-binding protein CysA (Pseudomonas putida (strain ATCC 47054 / DSM 6125 / CFBP 8728 / NCIMB 11950 / KT2440)).